A 219-amino-acid chain; its full sequence is Histone H1.11R (219 aa).

Low complexity-rich tracts occupy residues 1-20 (MAET…AAKA) and 28-40 (AAGG…PAGP). Disordered regions lie at residues 1-42 (MAET…GPSV) and 89-219 (LVSK…AKKK). The region spanning 38-111 (AGPSVTELIT…GASGSFRLSK (74 aa)) is the H15 domain. Basic residues-rich tracts occupy residues 121–135 (PKKK…KAAA), 143–160 (KKPK…KAKK), 168–183 (KSVK…KKAV), and 192–219 (KAVK…AKKK).

This sequence belongs to the histone H1/H5 family.

The protein localises to the nucleus. Its subcellular location is the chromosome. In terms of biological role, histones H1 are necessary for the condensation of nucleosome chains into higher-order structures. The chain is Histone H1.11R from Gallus gallus (Chicken).